A 164-amino-acid polypeptide reads, in one-letter code: C-phycoerythrin class 1 subunit alpha (164 aa).

(2R,3E)-phycoerythrobilin is bound by residues cysteine 82 and cysteine 139.

The protein belongs to the phycobiliprotein family. In terms of assembly, heterodimer of an alpha and a beta chain. Contains two covalently linked phycoerythrobilin chromophores.

The protein resides in the cellular thylakoid membrane. Its function is as follows. Light-harvesting photosynthetic bile pigment-protein from the phycobiliprotein complex. This is C-phycoerythrin class 1 subunit alpha (cpeA) from Synechococcus sp. (strain WH8020).